A 915-amino-acid chain; its full sequence is Translation initiation factor IF-2 (915 aa).

A compositionally biased stretch (basic and acidic residues) spans 83-94; it reads QSRRAVEKEQIL. Disordered regions lie at residues 83 to 177, 216 to 280, and 293 to 328; these read QSRR…PEPP, EADR…KPAV, and ISGM…LLRE. Composition is skewed to low complexity over residues 111-129 and 137-164; these read VRAA…EAPS and APAT…LSAP. Residues 165 to 177 show a composition bias toward pro residues; it reads LPEPVPEPVPEPP. Positions 293 to 305 are enriched in polar residues; that stretch reads ISGMDDSSGTGSR. Over residues 314–328 the composition is skewed to basic and acidic residues; it reads MEREREQEEADLLRE. Residues 412-582 enclose the tr-type G domain; it reads TRPPVVTIMG…LTEAEMRELK (171 aa). The segment at 421 to 428 is G1; it reads GHVDHGKT. GTP is bound at residue 421-428; that stretch reads GHVDHGKT. Residues 446-450 are G2; that stretch reads GITQH. The interval 468-471 is G3; it reads DTPG. GTP-binding positions include 468-472 and 522-525; these read DTPGH and NKMD. Residues 522-525 are G4; the sequence is NKMD. The G5 stretch occupies residues 558–560; sequence SAK.

It belongs to the TRAFAC class translation factor GTPase superfamily. Classic translation factor GTPase family. IF-2 subfamily.

It is found in the cytoplasm. Functionally, one of the essential components for the initiation of protein synthesis. Protects formylmethionyl-tRNA from spontaneous hydrolysis and promotes its binding to the 30S ribosomal subunits. Also involved in the hydrolysis of GTP during the formation of the 70S ribosomal complex. The polypeptide is Translation initiation factor IF-2 (Chlorobium luteolum (strain DSM 273 / BCRC 81028 / 2530) (Pelodictyon luteolum)).